Consider the following 383-residue polypeptide: MAEKRDYYDVLGVGRDASDDEIKKAYRKLSKKYHPDINKAPDAEAKFKEVTEAYEALSDPQKRAAYDQYGHAGMNGGFGGGAGAGQGFGGFGGGAEGFGGFDDIFSSFFGGGARQQPNGPRQGSDLQYRMDLKFEEAVFGKETKISYSREAECHTCHGSGAKPGTSAETCHKCHGAGQIQVERQTPLGRMMSRETCDVCGGTGKEIKSKCDTCHGTGREEERHTVKVKVPAGVEDGQQMRLQGQGEAGSNGGPYGDLFIVFRVAPSDEFERDGAQIFVEVPISFVQAALGDEIEVNTVHGPVKLKIPAGTQTNTVFRLRGKGAPKLHGTGNGDQKVTVNVVTPKSLNSKQRDALKAFAVASGDSVNPQDNNLFDKILNKKHKK.

Residues 6–70 form the J domain; that stretch reads DYYDVLGVGR…QKRAAYDQYG (65 aa). The segment at 140 to 222 adopts a CR-type zinc-finger fold; sequence GKETKISYSR…CHGTGREEER (83 aa). Positions 153, 156, 170, 173, 196, 199, 210, and 213 each coordinate Zn(2+). CXXCXGXG motif repeat units follow at residues 153–160, 170–177, 196–203, and 210–217; these read CHTCHGSG, CHKCHGAG, CDVCGGTG, and CDTCHGTG.

It belongs to the DnaJ family. Homodimer. Zn(2+) serves as cofactor.

It localises to the cytoplasm. In terms of biological role, participates actively in the response to hyperosmotic and heat shock by preventing the aggregation of stress-denatured proteins and by disaggregating proteins, also in an autonomous, DnaK-independent fashion. Unfolded proteins bind initially to DnaJ; upon interaction with the DnaJ-bound protein, DnaK hydrolyzes its bound ATP, resulting in the formation of a stable complex. GrpE releases ADP from DnaK; ATP binding to DnaK triggers the release of the substrate protein, thus completing the reaction cycle. Several rounds of ATP-dependent interactions between DnaJ, DnaK and GrpE are required for fully efficient folding. Also involved, together with DnaK and GrpE, in the DNA replication of plasmids through activation of initiation proteins. The chain is Chaperone protein DnaJ from Latilactobacillus sakei (Lactobacillus sakei).